We begin with the raw amino-acid sequence, 351 residues long: Phosphoribosylformylglycinamidine cyclo-ligase (351 aa).

It belongs to the AIR synthase family.

The protein localises to the cytoplasm. It carries out the reaction 2-formamido-N(1)-(5-O-phospho-beta-D-ribosyl)acetamidine + ATP = 5-amino-1-(5-phospho-beta-D-ribosyl)imidazole + ADP + phosphate + H(+). Its pathway is purine metabolism; IMP biosynthesis via de novo pathway; 5-amino-1-(5-phospho-D-ribosyl)imidazole from N(2)-formyl-N(1)-(5-phospho-D-ribosyl)glycinamide: step 2/2. The polypeptide is Phosphoribosylformylglycinamidine cyclo-ligase (Synechococcus sp. (strain JA-3-3Ab) (Cyanobacteria bacterium Yellowstone A-Prime)).